Consider the following 261-residue polypeptide: Homeobox protein ceh-33 (261 aa).

A DNA-binding region (homeobox) is located at residues 133 to 192 (GEETSYCFRDKSRVLLRDWYCRNSYPSPREKRELAEKTHLTVTQVSNWFKNRRQRDRAGV).

Belongs to the SIX/Sine oculis homeobox family.

It is found in the nucleus. The protein is Homeobox protein ceh-33 (ceh-33) of Caenorhabditis elegans.